Consider the following 105-residue polypeptide: Synaptic plasticity regulator PANTS (105 aa).

It belongs to the UPF0545 family. Interacts with RTN4 isoform A/Nogo-A; the interaction results in enhanced RTN4-mediated inhibition of AMPA receptor clustering. Also interacts with NCAM1, RANBP2 and CCT8. Rapidly degraded by proteolysis following neuronal stimulation, resulting in increased AMPA receptor clustering.

It is found in the synapse. The protein localises to the synaptic cleft. Its function is as follows. Negatively regulates long-term potentiation and modulates adult synaptic plasticity. Stabilizes the interaction of RTN4 isoform A/Nogo-A with its receptors, inhibiting clustering of postsynaptic AMPA receptors at synaptic sites. Upon neuronal stimulation, degraded at synapses, reducing RTN4 signaling and allowing AMPA receptor clustering at individual synapses. The polypeptide is Synaptic plasticity regulator PANTS (Pongo abelii (Sumatran orangutan)).